The following is a 584-amino-acid chain: Arginine--tRNA ligase (584 aa).

The 'HIGH' region signature appears at 130–140 (PNVAKEMHVGH).

This sequence belongs to the class-I aminoacyl-tRNA synthetase family. As to quaternary structure, monomer.

It is found in the cytoplasm. It carries out the reaction tRNA(Arg) + L-arginine + ATP = L-arginyl-tRNA(Arg) + AMP + diphosphate. The polypeptide is Arginine--tRNA ligase (Protochlamydia amoebophila (strain UWE25)).